Consider the following 282-residue polypeptide: tRNA uridine(34) hydroxylase (282 aa).

A Rhodanese domain is found at 128–222 (EGRPVVMLDT…YFEEVGGDHY (95 aa)). C182 (cysteine persulfide intermediate) is an active-site residue.

This sequence belongs to the TrhO family.

It catalyses the reaction uridine(34) in tRNA + AH2 + O2 = 5-hydroxyuridine(34) in tRNA + A + H2O. Its function is as follows. Catalyzes oxygen-dependent 5-hydroxyuridine (ho5U) modification at position 34 in tRNAs. This chain is tRNA uridine(34) hydroxylase, found in Cupriavidus pinatubonensis (strain JMP 134 / LMG 1197) (Cupriavidus necator (strain JMP 134)).